The sequence spans 530 residues: Membrane-bound lytic murein transglycosylase F (530 aa).

A signal peptide spans 1–27; it reads MTPFAYKLPIRALWLGLLSLLLVGCQI. Positions 28 to 279 are non-LT domain; sequence DSEPKSELEK…SLEEKYIGHI (252 aa). An LT domain region spans residues 280-530; that stretch reads GAFDYVDTRA…SAKPSTESKN (251 aa). The active site involves Glu-324. The segment at 505 to 530 is disordered; that stretch reads ALESESLENSESSAEPSAKPSTESKN. A compositionally biased stretch (low complexity) spans 513-530; that stretch reads NSESSAEPSAKPSTESKN.

It in the N-terminal section; belongs to the bacterial solute-binding protein 3 family. The protein in the C-terminal section; belongs to the transglycosylase Slt family.

It localises to the cell outer membrane. The catalysed reaction is Exolytic cleavage of the (1-&gt;4)-beta-glycosidic linkage between N-acetylmuramic acid (MurNAc) and N-acetylglucosamine (GlcNAc) residues in peptidoglycan, from either the reducing or the non-reducing ends of the peptidoglycan chains, with concomitant formation of a 1,6-anhydrobond in the MurNAc residue.. Its function is as follows. Murein-degrading enzyme that degrades murein glycan strands and insoluble, high-molecular weight murein sacculi, with the concomitant formation of a 1,6-anhydromuramoyl product. Lytic transglycosylases (LTs) play an integral role in the metabolism of the peptidoglycan (PG) sacculus. Their lytic action creates space within the PG sacculus to allow for its expansion as well as for the insertion of various structures such as secretion systems and flagella. The polypeptide is Membrane-bound lytic murein transglycosylase F (Vibrio cholerae serotype O1 (strain ATCC 39541 / Classical Ogawa 395 / O395)).